The chain runs to 358 residues: WD repeat-containing protein 53 (358 aa).

5 WD repeats span residues 8 to 46 (GHSSPILCLNASQEGLVASGAEGGDLVVWGEDGTLLGHT), 92 to 131 (VNEEEINCLSLNETENLLASADDSGTIKILDLENKKISRS), 134 to 174 (RHSN…PLWI), 195 to 234 (LNPALAHSVSVASCGNVFSCGAEDGKVRIFRVMGVKCEQE), and 239 to 278 (GHSLGVSQVCFLRESYLLLTGGNDGKIKLWDVSSEIEKKH). Positions 278–294 (HKSPTKHTHRKKTKRAA) are enriched in basic residues. A disordered region spans residues 278–309 (HKSPTKHTHRKKTKRAAYTKQGGGTHASVTGE).

It belongs to the WD repeat WDR53 family.

In Bos taurus (Bovine), this protein is WD repeat-containing protein 53 (WDR53).